The chain runs to 187 residues: Ribosome-recycling factor (187 aa).

This sequence belongs to the RRF family.

The protein resides in the cytoplasm. Functionally, responsible for the release of ribosomes from messenger RNA at the termination of protein biosynthesis. May increase the efficiency of translation by recycling ribosomes from one round of translation to another. This chain is Ribosome-recycling factor, found in Paracoccus zeaxanthinifaciens.